The following is a 396-amino-acid chain: Ribosomal RNA large subunit methyltransferase I (396 aa).

One can recognise a PUA domain in the interval 2–79; sequence AVRIKLKPGR…REEEIDREFF (78 aa).

Belongs to the methyltransferase superfamily. RlmI family.

Its subcellular location is the cytoplasm. It carries out the reaction cytidine(1962) in 23S rRNA + S-adenosyl-L-methionine = 5-methylcytidine(1962) in 23S rRNA + S-adenosyl-L-homocysteine + H(+). Its function is as follows. Specifically methylates the cytosine at position 1962 (m5C1962) of 23S rRNA. The polypeptide is Ribosomal RNA large subunit methyltransferase I (Shewanella sp. (strain ANA-3)).